Here is a 143-residue protein sequence, read N- to C-terminus: Protein SLC31A2 (143 aa).

Residues 1-22 lie on the Extracellular side of the membrane; sequence MAMHFIFSDTAVLLFDFWSVHS. A helical transmembrane segment spans residues 23–43; it reads PAGMALSVLVLLLLAVLYEGI. Over 44-93 the chain is Cytoplasmic; that stretch reads KVGKAKLLNQVLVNLPTSISQQTIAETDGDSAGSDSFPVGRTHHRWYLCH. S77 is modified (phosphoserine). A helical membrane pass occupies residues 94 to 114; that stretch reads FGQSLIHVIQVVIGYFIMLAV. The Extracellular portion of the chain corresponds to 115-119; the sequence is MSYNT. The helical transmembrane segment at 120–140 threads the bilayer; that stretch reads WIFLGVVLGSAVGYYLAYPLL. Over 141–143 the chain is Cytoplasmic; it reads STA.

It belongs to the copper transporter (Ctr) (TC 1.A.56) family. SLC31A subfamily. In terms of assembly, oligomer. Interacts with SLC31A1; this interaction stabilizes SLC31A2 and protects it from ubiquitination and the subsequent degradation. In terms of processing, ubiquitinated; ubiquitination and the subsequent proteasomal degradation are prevent by SLC31A1 that stabilizes it. Ubiquitous with high expression in placenta and heart.

The protein localises to the membrane. The protein resides in the cytoplasmic vesicle membrane. Its subcellular location is the late endosome membrane. It is found in the lysosome membrane. Its function is as follows. Does not function as a copper(1+) importer in vivo. However, in vitro functions as a low-affinity copper(1+) importer. Regulator of SLC31A1 which facilitates the cleavage of the SLC31A1 ecto-domain or which stabilizes the truncated form of SLC31A1 (Truncated CTR1 form), thereby drives the SLC31A1 truncated form-dependent endosomal copper export and modulates the copper and cisplatin accumulation via SLC31A1. The sequence is that of Protein SLC31A2 from Homo sapiens (Human).